Here is a 248-residue protein sequence, read N- to C-terminus: GTP cyclohydrolase 1 type 2 homolog (248 aa).

Residues His-64, His-65, Asp-101, His-216, and Glu-220 each coordinate a divalent metal cation.

Belongs to the GTP cyclohydrolase I type 2/NIF3 family. Homohexamer.

The sequence is that of GTP cyclohydrolase 1 type 2 homolog from Borreliella burgdorferi (strain ATCC 35210 / DSM 4680 / CIP 102532 / B31) (Borrelia burgdorferi).